The following is a 548-amino-acid chain: DNA ligase (548 aa).

E252 is a binding site for ATP. K254 acts as the N6-AMP-lysine intermediate in catalysis. The ATP site is built by R259, R274, E303, F343, R414, and K420.

It belongs to the ATP-dependent DNA ligase family. Requires Mg(2+) as cofactor.

The catalysed reaction is ATP + (deoxyribonucleotide)n-3'-hydroxyl + 5'-phospho-(deoxyribonucleotide)m = (deoxyribonucleotide)n+m + AMP + diphosphate.. Functionally, DNA ligase that seals nicks in double-stranded DNA during DNA replication, DNA recombination and DNA repair. This Natronomonas pharaonis (strain ATCC 35678 / DSM 2160 / CIP 103997 / JCM 8858 / NBRC 14720 / NCIMB 2260 / Gabara) (Halobacterium pharaonis) protein is DNA ligase.